Reading from the N-terminus, the 2368-residue chain is Voltage-dependent P/Q-type calcium channel subunit alpha-1A (2368 aa).

Over 1-100 (MARFGDEMPG…KYAKKITEWP (100 aa)) the chain is Cytoplasmic. One copy of the I repeat lies at 65–365 (NPIPVRQNCL…LVLGVLSGEF (301 aa)). A helical membrane pass occupies residues 101 to 119 (PFEYMILATIIANCIVLAL). Residues 120–138 (EQHLPDDDKTPMSERLDDT) are Extracellular-facing. A helical membrane pass occupies residues 139-156 (EPYFIGIFCFEAGIKIVA). Residues 157 to 168 (LGFAFHKGSYLR) are Cytoplasmic-facing. Residues 169–184 (NGWNVMDFVVVLTGIL) traverse the membrane as a helical segment. The Extracellular portion of the chain corresponds to 185-192 (ATVGTEFD). The chain crosses the membrane as a helical span at residues 193 to 211 (LRTLRAVRVLRPLKLVSGI). The Cytoplasmic portion of the chain corresponds to 212-230 (PSLQVVLKSIMKAMIPLLQ). The chain crosses the membrane as a helical span at residues 231–250 (IGLLLFFAILIFAIIGLEFY). Residues 251–337 (MGKFHTTCFE…NSNDASGNTW (87 aa)) are Extracellular-facing. Asparagine 285 carries an N-linked (GlcNAc...) asparagine glycan. Glutamate 320 lines the Ca(2+) pocket. A helical transmembrane segment spans residues 338-362 (NWLYFIPLIIIGSFFMLNLVLGVLS). Over 363 to 489 (GEFAKERERV…FYIRRMVKTQ (127 aa)) the chain is Cytoplasmic. Positions 385-402 (QQIERELNGYMEWISKAE) are binding to the beta subunit. Threonine 411 carries the phosphothreonine modification. Serine 450 and serine 453 each carry phosphoserine. An II repeat occupies 475 to 719 (ERRMRFYIRR…VFLAIAVDNL (245 aa)). The helical transmembrane segment at 490–509 (AFYWTVLSLVALNTLCVAIV) threads the bilayer. Over 510–523 (HYNQPEWLSDFLYY) the chain is Extracellular. A helical membrane pass occupies residues 524–543 (AEFIFLGLFMSEMFIKMYGL). The Cytoplasmic portion of the chain corresponds to 544–551 (GTRPYFHS). A helical transmembrane segment spans residues 552–570 (SFNCFDCGVIIGSIFEVIW). Over 571–580 (AVIKPGTSFG) the chain is Extracellular. A helical transmembrane segment spans residues 581 to 599 (ISVLRALRLLRIFKVTKYW). Residues 600–618 (ASLRNLVVSLLNSMKSIIS) lie on the Cytoplasmic side of the membrane. A helical membrane pass occupies residues 619 to 638 (LLFLLFLFIVVFALLGMQLF). The Extracellular portion of the chain corresponds to 639 to 691 (GGQFNFDEGTPPTNFDTFPAAIMTVFQILTGEDWNEVMYDGIKSQGGVQGGMV). Glutamate 670 provides a ligand contact to Ca(2+). A helical transmembrane segment spans residues 692–716 (FSIYFIVLTLFGNYTLLNVFLAIAV). The Cytoplasmic portion of the chain corresponds to 717–1190 (DNLANAQELT…TNPLRRLCHY (474 aa)). Serine 752 and serine 755 each carry phosphoserine. The interval 762-781 (AVKEQQKNQKPTKSVWEQRT) is disordered. The segment covering 769–779 (NQKPTKSVWEQ) has biased composition (polar residues). The residue at position 792 (serine 792) is a Phosphoserine. 2 disordered regions span residues 823–1117 (PLVV…RKPE) and 1137–1170 (VNKNANPDPLPKKEEEKKEEEEADPGEDGPKPMP). 3 stretches are compositionally biased toward basic and acidic residues: residues 850–862 (RPRESARDPDARR), 871–924 (APGR…EGEP), and 932–958 (RPGDEPDDRPERRPRPRDATRPARAAD). Serine 1038, serine 1042, and serine 1051 each carry phosphoserine. A compositionally biased stretch (polar residues) spans 1056–1073 (GNSTNPGPALATNPQNAA). Over residues 1074–1083 (SRRTPNNPGN) the composition is skewed to low complexity. Positions 1094–1111 (ENSLIVTNPSSTQPNSAK) are enriched in polar residues. Over residues 1153–1163 (KKEEEEADPGE) the composition is skewed to acidic residues. Residues 1182 to 1465 (NPLRRLCHYI…IFVALIIITF (284 aa)) form an III repeat. Residues 1191-1214 (ILNLRYFEMCILMVIAMSSIALAA) form a helical membrane-spanning segment. Residues 1215–1231 (EDPVQPNAPRNNVLRYF) lie on the Extracellular side of the membrane. The chain crosses the membrane as a helical span at residues 1232–1251 (DYVFTGVFTFEMVIKMIDLG). The Cytoplasmic portion of the chain corresponds to 1252 to 1258 (LVLHQGA). The helical transmembrane segment at 1259–1282 (YFRDLWNILDFIVVSGALVAFAFT) threads the bilayer. The Extracellular portion of the chain corresponds to 1283-1293 (GNSKGKDINTI). The helical transmembrane segment at 1294–1311 (KSLRVLRVLRPLKTIKRL) threads the bilayer. Residues 1312–1330 (PKLKAVFDCVVNSLKNVFN) are Cytoplasmic-facing. The chain crosses the membrane as a helical span at residues 1331–1350 (ILIVYMLFMFIFAVVAVQLF). The Extracellular portion of the chain corresponds to 1351–1437 (KGKFFHCTDE…QGPSPGYRME (87 aa)). Residue glutamate 1411 coordinates Ca(2+). The chain crosses the membrane as a helical span at residues 1438–1462 (MSIFYVVYFVVFPFFFVNIFVALII). Residues 1463–1518 (ITFQEQGDKMMEEYSLEKNERACIDFAISAKPLTRHMPQNKQSFQYRMWQFVVSPP) are Cytoplasmic-facing. The stretch at 1502 to 1765 (NKQSFQYRMW…LFVAVIMDNF (264 aa)) is one IV repeat. A helical membrane pass occupies residues 1519 to 1537 (FEYTIMAMIALNTIVLMMK). The Extracellular segment spans residues 1538-1551 (FYGASVAYENALRV). Residues 1552 to 1573 (FNIVFTSLFSLECVLKVMAFGI) traverse the membrane as a helical segment. Over 1574 to 1580 (LNYFRDA) the chain is Cytoplasmic. A helical membrane pass occupies residues 1581 to 1600 (WNIFDFVTVLGSITDILVTE). Topologically, residues 1601–1607 (FGNNFIN) are extracellular. Residue asparagine 1607 is glycosylated (N-linked (GlcNAc...) asparagine). The chain crosses the membrane as a helical span at residues 1608–1626 (LSFLRLFRAARLIKLLRQG). At 1627–1645 (YTIRILLWTFVQSFKALPY) the chain is on the cytoplasmic side. The chain crosses the membrane as a helical span at residues 1646-1665 (VCLLIAMLFFIYAIIGMQVF). Residues 1666–1737 (GNIGIDGEDE…ILTADCGNEF (72 aa)) are Extracellular-facing. A helical transmembrane segment spans residues 1738-1763 (AYFYFVSFIFLCSFLMLNLFVAVIMD). Residues 1764–2368 (NFEYLTRDSS…AYSESEDDWC (605 aa)) are Cytoplasmic-facing. Position 1935 is a phosphothreonine (threonine 1935). The disordered stretch occupies residues 1940-2368 (QRMEPPSPTQ…AYSESEDDWC (429 aa)). Composition is skewed to polar residues over residues 1948 to 1963 (TQEGGPSQNALPSTQL) and 1981 to 1997 (SWVTQRAQEMFQKTGTW). Residues serine 1998, serine 2016, serine 2028, serine 2030, serine 2071, and serine 2091 each carry the phosphoserine modification. The span at 2008–2017 (PNSQPNSQSV) shows a compositional bias: polar residues. Basic and acidic residues predominate over residues 2018–2034 (EMREMGTDGYSDSEHYL). Positions 2063-2073 (DLSTISDTSPM) are enriched in polar residues. Composition is skewed to basic and acidic residues over residues 2085 to 2102 (RRLDDYSLERVPPEENQR) and 2143 to 2153 (PSKDRDQDRGR). Residues 2154–2172 (PKDRKHRPHHHHHHHHHHP) show a composition bias toward basic residues. Residues 2173-2209 (PAPDRDRYAQERPDTGRARAREQRWSRSPSEGREHTT) show a composition bias toward basic and acidic residues. Low complexity predominate over residues 2213–2231 (GSSSVSGSPAPSTSGTSTP). Over residues 2289–2305 (EGPRPRGADYTEPDSPR) the composition is skewed to basic and acidic residues.

The protein belongs to the calcium channel alpha-1 subunit (TC 1.A.1.11) family. CACNA1A subfamily. In terms of assembly, voltage-dependent calcium channels are multisubunit complexes, consisting of alpha-1, alpha-2, beta and delta subunits in a 1:1:1:1 ratio. The channel activity is directed by the pore-forming and voltage-sensitive alpha-1 subunit. In many cases, this subunit is sufficient to generate voltage-sensitive calcium channel activity. The auxiliary subunits beta and alpha-2/delta linked by a disulfide bridge regulate the channel activity. Interacts with CABP1. Interacts with the spider omega-agatoxin-IVA (AC P30288). Interacts with TSPOAP1. As to expression, brain specific; mainly found in the cerebellum, olfactory bulb, cerebral cortex, hippocampus, and inferior colliculus. In the hippocampus, expression occurs in pyramidal and granule neurons, as well as in interneurons. Purkinje cells contain predominantly P-type VSCC, the Q-type being a prominent calcium current in cerebellar granule cells.

It localises to the cell membrane. It carries out the reaction Ca(2+)(in) = Ca(2+)(out). Voltage-sensitive calcium channels (VSCC) mediate the entry of calcium ions into excitable cells and are also involved in a variety of calcium-dependent processes, including muscle contraction, hormone or neurotransmitter release, gene expression, cell motility, cell division and cell death. The isoform alpha-1A gives rise to P and/or Q-type calcium currents. P/Q-type calcium channels belong to the 'high-voltage activated' (HVA) group and are specifically blocked by the spider omega-agatoxin-IVA (AC P54282). They are however insensitive to dihydropyridines (DHP). The chain is Voltage-dependent P/Q-type calcium channel subunit alpha-1A from Mus musculus (Mouse).